The following is a 248-amino-acid chain: Transcription factor MYBC1 (248 aa).

The segment at residues 102–161 (TLKRPRLVWTPQLHKRFVDAVGHLGIKNAVPKTIMQLMSVEGLTRENVASHLQKYRLYLR) is a DNA-binding region (myb-like GARP).

As to expression, expressed in roots, leaves, stems, petioles, filaments, stigma, pedicels, sepals, anthers, petals, and siliques.

It is found in the nucleus. Functionally, probable transcription factor that acts as a negative regulator of freezing tolerance via a CBF-independent pathway. The polypeptide is Transcription factor MYBC1 (Arabidopsis thaliana (Mouse-ear cress)).